We begin with the raw amino-acid sequence, 220 residues long: RING-H2 finger protein ATL77 (220 aa).

A helical transmembrane segment spans residues 53–73 (LMLLSILLCGIICSLGLHYII). The RING-type; atypical zinc finger occupies 130-172 (CVICLSDFVAGEQLRVLPKCNHGFHLRCIDKWLTQHMTCPKCR).

The protein belongs to the RING-type zinc finger family. ATL subfamily.

It is found in the membrane. It catalyses the reaction S-ubiquitinyl-[E2 ubiquitin-conjugating enzyme]-L-cysteine + [acceptor protein]-L-lysine = [E2 ubiquitin-conjugating enzyme]-L-cysteine + N(6)-ubiquitinyl-[acceptor protein]-L-lysine.. It functions in the pathway protein modification; protein ubiquitination. The protein is RING-H2 finger protein ATL77 (ATL77) of Arabidopsis thaliana (Mouse-ear cress).